A 79-amino-acid polypeptide reads, in one-letter code: D-alanyl carrier protein (79 aa).

In terms of domain architecture, Carrier spans 1–76; sequence MKEQIFDIIE…KIAARVQEKT (76 aa). Serine 34 bears the O-(pantetheine 4'-phosphoryl)serine mark.

Belongs to the DltC family. In terms of processing, 4'-phosphopantetheine is transferred from CoA to a specific serine of apo-DCP.

The protein localises to the cytoplasm. It participates in cell wall biogenesis; lipoteichoic acid biosynthesis. Functionally, carrier protein involved in the D-alanylation of lipoteichoic acid (LTA). The loading of thioester-linked D-alanine onto DltC is catalyzed by D-alanine--D-alanyl carrier protein ligase DltA. The DltC-carried D-alanyl group is further transferred to cell membrane phosphatidylglycerol (PG) by forming an ester bond, probably catalyzed by DltD. D-alanylation of LTA plays an important role in modulating the properties of the cell wall in Gram-positive bacteria, influencing the net charge of the cell wall. This is D-alanyl carrier protein from Lactococcus lactis subsp. cremoris (strain SK11).